The following is a 951-amino-acid chain: Zinc fingers and homeoboxes protein 3 (951 aa).

A disordered region spans residues 1–66; the sequence is MASKRKSTTP…SSTDGSALAN (66 aa). The segment covering 42–58 has biased composition (low complexity); that stretch reads PSEAPEASSEAAPNPSS. C2H2-type zinc fingers lie at residues 77–100 and 109–132; these read YSCKECDFRSQDVTHFVGHMTSEH and FVCTGCSFLAKTPEGLSLHNAKCH. Residues 198-249 are disordered; sequence KENAPTQPGGEALPKPLAGETEGKEGDHTFINGATPVSQASANSTKPPHTAN. Positions 232–244 are enriched in polar residues; it reads TPVSQASANSTKP. Residues 237–481 are required for homodimerization and interaction with NFYA; sequence ASANSTKPPH…LLTACPSITS (245 aa). The tract at residues 297–495 is required for repressor activity; it reads LSSIPTYNAA…DANIYKNKKS (199 aa). 2 consecutive DNA-binding regions (homeobox) follow at residues 298 to 357 and 487 to 546; these read SSIP…GISW and ANIY…RNLK. Positions 490–548 are required for nuclear localization; the sequence is YKNKKSHEQLSALKGSFCRNQFPGQSEVEHLTKVTGLSTREVRKWFSDRRYHCRNLKGT. The residue at position 597 (S597) is a Phosphoserine. Positions 605–664 form a DNA-binding region, homeobox 3; it reads TPTKYKERAPEQLRVLESSFAQNPLPPEEELDRLRSETKMTRREIDGWFSERRKRVNAEE. Disordered regions lie at residues 621-642 and 661-702; these read ESSFAQNPLPPEEELDRLRSET and NAEE…NGSS. Residues 661–674 are compositionally biased toward basic and acidic residues; sequence NAEETKKADGHAPQ. Over residues 675-690 the composition is skewed to acidic residues; it reads EEAEGAEEEGRDEELA. Residues S701 and S716 each carry the phosphoserine modification. 2 DNA-binding regions (homeobox) span residues 759–818 and 830–889; these read PSRV…KNGQ and FPPG…TRAV. Residues 885-951 form a disordered region; sequence ETRAVADTSS…PQSGRQLETD (67 aa). Residues S922 and S941 each carry the phosphoserine modification. The span at 937 to 951 shows a compositional bias: polar residues; that stretch reads FDTSSPQSGRQLETD.

The protein belongs to the ZHX family. Homodimer (via homeobox domain 1). Heterodimer with ZHX1 (via homeobox domain 1). Heterodimer with ZHX2 (via homeobox domain 1). Heterodimerization with ZHX1 is a prerequisite for repressor activity. Interacts with NFYA. In terms of tissue distribution, widely expressed.

The protein localises to the cytoplasm. Its subcellular location is the nucleus. Functionally, acts as a transcriptional repressor. Involved in the early stages of mesenchymal stem cell (MSC) osteogenic differentiation. Is a regulator of podocyte gene expression during primary glomerula disease. Binds to promoter DNA. This chain is Zinc fingers and homeoboxes protein 3 (Zhx3), found in Rattus norvegicus (Rat).